A 795-amino-acid chain; its full sequence is Antibiotic resistant DNA gyrase subunit B (795 aa).

The Toprim domain occupies 421 to 536 (SELYLVEGNS…RGYIYIAQPP (116 aa)). Glu-427, Asp-501, and Asp-503 together coordinate Mg(2+).

It belongs to the type II topoisomerase GyrB family. As to quaternary structure, heterotetramer, composed of two GyrA and two GyrB chains. In the heterotetramer, GyrA contains the active site tyrosine that forms a transient covalent intermediate with DNA, while GyrB binds cofactors and catalyzes ATP hydrolysis. The cofactor is Mg(2+). Requires Mn(2+) as cofactor. Ca(2+) is required as a cofactor.

It localises to the cytoplasm. The catalysed reaction is ATP-dependent breakage, passage and rejoining of double-stranded DNA.. In terms of biological role, a type II topoisomerase that negatively supercoils closed circular double-stranded (ds) DNA in an ATP-dependent manner to modulate DNA topology and maintain chromosomes in an underwound state. Negative supercoiling favors strand separation, and DNA replication, transcription, recombination and repair, all of which involve strand separation. Also able to catalyze the interconversion of other topological isomers of dsDNA rings, including catenanes and knotted rings. Type II topoisomerases break and join 2 DNA strands simultaneously in an ATP-dependent manner. This is Antibiotic resistant DNA gyrase subunit B from Neisseria gonorrhoeae.